We begin with the raw amino-acid sequence, 432 residues long: Adenylosuccinate synthetase (432 aa).

Residues 13 to 19 (GDEGKGK) and 41 to 43 (GHT) contribute to the GTP site. Asp-14 serves as the catalytic Proton acceptor. Mg(2+) is bound by residues Asp-14 and Gly-41. Residues 14–17 (DEGK), 39–42 (NAGH), Thr-130, Arg-144, Gln-225, Thr-240, and Arg-304 each bind IMP. The active-site Proton donor is His-42. 300-306 (AVTGRPR) is a substrate binding site. Residues Arg-306, 332–334 (KLD), and 415–417 (STG) contribute to the GTP site.

It belongs to the adenylosuccinate synthetase family. In terms of assembly, homodimer. Mg(2+) serves as cofactor.

The protein localises to the cytoplasm. It carries out the reaction IMP + L-aspartate + GTP = N(6)-(1,2-dicarboxyethyl)-AMP + GDP + phosphate + 2 H(+). It functions in the pathway purine metabolism; AMP biosynthesis via de novo pathway; AMP from IMP: step 1/2. Functionally, plays an important role in the de novo pathway of purine nucleotide biosynthesis. Catalyzes the first committed step in the biosynthesis of AMP from IMP. In Haemophilus influenzae (strain 86-028NP), this protein is Adenylosuccinate synthetase.